The primary structure comprises 176 residues: Probable DNA-directed RNA polymerase subunit delta (176 aa).

Residues 14–81 enclose the HTH HARE-type domain; the sequence is KSFIDMAYTL…GENLWGLRDW (68 aa). Positions 114-176 are disordered; the sequence is LGEDEMDDDD…VFEDEEDFND (63 aa). Composition is skewed to acidic residues over residues 116 to 145 and 153 to 176; these read EDEM…QVEE and VIEE…DFND.

The protein belongs to the RpoE family. As to quaternary structure, RNAP is composed of a core of 2 alpha, a beta and a beta' subunits. The core is associated with a delta subunit and one of several sigma factors.

Functionally, participates in both the initiation and recycling phases of transcription. In the presence of the delta subunit, RNAP displays an increased specificity of transcription, a decreased affinity for nucleic acids, and an increased efficiency of RNA synthesis because of enhanced recycling. This Staphylococcus aureus (strain JH1) protein is Probable DNA-directed RNA polymerase subunit delta.